Reading from the N-terminus, the 344-residue chain is Phenylalanine--tRNA ligase alpha subunit (344 aa).

A Mg(2+)-binding site is contributed by E269.

This sequence belongs to the class-II aminoacyl-tRNA synthetase family. Phe-tRNA synthetase alpha subunit type 1 subfamily. As to quaternary structure, tetramer of two alpha and two beta subunits. The cofactor is Mg(2+).

The protein resides in the cytoplasm. The catalysed reaction is tRNA(Phe) + L-phenylalanine + ATP = L-phenylalanyl-tRNA(Phe) + AMP + diphosphate + H(+). This Ralstonia nicotianae (strain ATCC BAA-1114 / GMI1000) (Ralstonia solanacearum) protein is Phenylalanine--tRNA ligase alpha subunit.